The following is a 140-amino-acid chain: ATP synthase epsilon chain (140 aa).

It belongs to the ATPase epsilon chain family. In terms of assembly, F-type ATPases have 2 components, CF(1) - the catalytic core - and CF(0) - the membrane proton channel. CF(1) has five subunits: alpha(3), beta(3), gamma(1), delta(1), epsilon(1). CF(0) has three main subunits: a, b and c.

It localises to the cell membrane. Produces ATP from ADP in the presence of a proton gradient across the membrane. This chain is ATP synthase epsilon chain, found in Baumannia cicadellinicola subsp. Homalodisca coagulata.